Here is a 213-residue protein sequence, read N- to C-terminus: Nucleolar protein 12 (213 aa).

A coiled-coil region spans residues 33 to 96 (GFHKRKVERK…RLVTAKTESV (64 aa)). A disordered region spans residues 109-213 (TISDLDLSGA…LTGKAQHSRE (105 aa)). Over residues 130 to 139 (AGDESEEEAS) the composition is skewed to acidic residues. The segment covering 170–182 (AHSRKKVKRKHPR) has biased composition (basic residues).

Belongs to the RRP17 family. As to quaternary structure, interacts with KIAA1191.

Its subcellular location is the nucleus. The protein resides in the nucleolus. It localises to the cytoplasm. Its function is as follows. Multifunctional RNA binding protein that plays a role in RNA metabolism and DNA maintenance. Participates in the resolution of DNA stress and the maintenance of genome integrity by localizing to sites of DNA insults. Also plays a role in proper nucleolar organization by limiting nucleolar size and regulating nucleolar number. Mechanistically, regulates the nucleolar levels of fibrillarin and nucleolin, two key players in pre-rRNA processing and ribosome assembly. The chain is Nucleolar protein 12 (NOL12) from Pongo abelii (Sumatran orangutan).